The following is a 475-amino-acid chain: 1,3-beta-glucanosyltransferase gel2 (475 aa).

Positions 1 to 21 (MLPTYVRLFTAVCALATTASA) are cleaved as a signal peptide. Cysteine 69 and cysteine 98 form a disulfide bridge. Residues tyrosine 87, asparagine 159, glutamate 160, and aspartate 201 each contribute to the (1,3-beta-D-glucosyl)n site. The active-site Proton donor is the glutamate 160. Intrachain disulfides connect cysteine 215–cysteine 350 and cysteine 234–cysteine 265. The N-linked (GlcNAc...) asparagine glycan is linked to asparagine 236. Glutamate 262 acts as the Nucleophile in catalysis. Tyrosine 294 provides a ligand contact to (1,3-beta-D-glucosyl)n. N-linked (GlcNAc...) asparagine glycosylation is found at asparagine 311, asparagine 339, and asparagine 357. A disordered region spans residues 420–451 (GESNTPGAHSSGSTSGSSSSGGSSSSSSDKES). Residues 429 to 446 (SSGSTSGSSSSGGSSSSS) show a composition bias toward low complexity. A lipid anchor (GPI-like-anchor amidated serine) is attached at serine 451. The propeptide at 452–475 (AAGTISVPFVGLLSAASFMAFFML) is removed in mature form.

This sequence belongs to the glycosyl hydrolase 72 family. Post-translationally, the GPI-like anchor contains a phosphoceramide lipid group.

It is found in the cell membrane. Functionally, splits internally a 1,3-beta-glucan molecule and transfers the newly generated reducing end (the donor) to the non-reducing end of another 1,3-beta-glucan molecule (the acceptor) forming a 1,3-beta linkage, resulting in the elongation of 1,3-beta-glucan chains in the cell wall. Involved in cell wall morphogenesis. The sequence is that of 1,3-beta-glucanosyltransferase gel2 (gel2) from Aspergillus fumigatus (strain CBS 144.89 / FGSC A1163 / CEA10) (Neosartorya fumigata).